A 408-amino-acid polypeptide reads, in one-letter code: MEKYLVGGAVRDALLKLPVQEKDWVVVGSSPQEMLNIGYEQVGKDFPVFLHPESHEEYALARTERKSGQGYTGFICHTAPSITIEEDLYRRDLTINAMAYDSHGNLIDPYHGQRDIKLRLLRHVSHTFHEDPLRVLRVARFAARFAHMNFAIAPETLILMKQMIHELLSLSPERIWTETKKALITDNPQVYFTVLRHCGALKILFPELDALFDIPTPTQYCTKINTGYYTMTTLSKAAYLTDDISVRFSVLCRDLGKGIPLNKINKNTKHHDHRKLGITLIHNLCNRFKIPHEIRNFSKITSEYHDYLYNVKILKPEMLMTLFHVFDCWRRPNRIDQIILVSQSDPIRWKNYNNYSLNQENLLRTAFTVTKKISTVDIIKDGFTGSNISRELYARRLHALNSWKNKQI.

2 residues coordinate ATP: glycine 8 and arginine 11. Positions 8 and 11 each coordinate CTP. Mg(2+) is bound by residues glutamate 21 and aspartate 23. ATP is bound by residues arginine 91, arginine 137, and arginine 140. The CTP site is built by arginine 91, arginine 137, and arginine 140. The HD domain occupies 226–329 (TGYYTMTTLS…MTLFHVFDCW (104 aa)).

This sequence belongs to the tRNA nucleotidyltransferase/poly(A) polymerase family. Bacterial CCA-adding enzyme type 2 subfamily. Mg(2+) is required as a cofactor.

The catalysed reaction is a tRNA precursor + 2 CTP + ATP = a tRNA with a 3' CCA end + 3 diphosphate. The enzyme catalyses a tRNA with a 3' CCA end + 2 CTP + ATP = a tRNA with a 3' CCACCA end + 3 diphosphate. Catalyzes the addition and repair of the essential 3'-terminal CCA sequence in tRNAs without using a nucleic acid template. Adds these three nucleotides in the order of C, C, and A to the tRNA nucleotide-73, using CTP and ATP as substrates and producing inorganic pyrophosphate. tRNA 3'-terminal CCA addition is required both for tRNA processing and repair. Also involved in tRNA surveillance by mediating tandem CCA addition to generate a CCACCA at the 3' terminus of unstable tRNAs. While stable tRNAs receive only 3'-terminal CCA, unstable tRNAs are marked with CCACCA and rapidly degraded. The sequence is that of CCA-adding enzyme from Blochmanniella pennsylvanica (strain BPEN).